The sequence spans 560 residues: Oxygen-dependent choline dehydrogenase (560 aa).

8 to 37 contacts FAD; sequence DYIIIGAGSAGNVLATRLTEDADVSVLLLE. The Proton acceptor role is filled by H475.

It belongs to the GMC oxidoreductase family. It depends on FAD as a cofactor.

The catalysed reaction is choline + A = betaine aldehyde + AH2. The enzyme catalyses betaine aldehyde + NAD(+) + H2O = glycine betaine + NADH + 2 H(+). Its pathway is amine and polyamine biosynthesis; betaine biosynthesis via choline pathway; betaine aldehyde from choline (cytochrome c reductase route): step 1/1. In terms of biological role, involved in the biosynthesis of the osmoprotectant glycine betaine. Catalyzes the oxidation of choline to betaine aldehyde and betaine aldehyde to glycine betaine at the same rate. The polypeptide is Oxygen-dependent choline dehydrogenase (Stenotrophomonas maltophilia (strain R551-3)).